Here is a 488-residue protein sequence, read N- to C-terminus: Ribulose bisphosphate carboxylase large chain (488 aa).

Residues asparagine 127 and threonine 177 each coordinate substrate. Lysine 179 (proton acceptor) is an active-site residue. Residue lysine 181 participates in substrate binding. Positions 205, 207, and 208 each coordinate Mg(2+). Lysine 205 is modified (N6-carboxylysine). Histidine 297 functions as the Proton acceptor in the catalytic mechanism. The substrate site is built by arginine 298, histidine 330, and serine 382.

This sequence belongs to the RuBisCO large chain family. Type I subfamily. Heterohexadecamer of 8 large chains and 8 small chains. It depends on Mg(2+) as a cofactor.

Its subcellular location is the plastid. The protein resides in the chloroplast. It catalyses the reaction 2 (2R)-3-phosphoglycerate + 2 H(+) = D-ribulose 1,5-bisphosphate + CO2 + H2O. It carries out the reaction D-ribulose 1,5-bisphosphate + O2 = 2-phosphoglycolate + (2R)-3-phosphoglycerate + 2 H(+). Its function is as follows. RuBisCO catalyzes two reactions: the carboxylation of D-ribulose 1,5-bisphosphate, the primary event in carbon dioxide fixation, as well as the oxidative fragmentation of the pentose substrate in the photorespiration process. Both reactions occur simultaneously and in competition at the same active site. In Olisthodiscus luteus (Marine phytoflagellate), this protein is Ribulose bisphosphate carboxylase large chain.